Consider the following 1311-residue polypeptide: Zinc finger protein 521 (1311 aa).

The segment covering 1–10 has biased composition (basic residues); that stretch reads MSRRKQAKPR. Residues 1-37 form a disordered region; it reads MSRRKQAKPRSLKDPNCKLEDKTEDGEALDCKKRPED. Residues 11–21 show a composition bias toward basic and acidic residues; that stretch reads SLKDPNCKLED. Residues 47–67 form a C2H2-type 1; degenerate zinc finger; that stretch reads HSCDSCLQVFESLSDITEHKI. The tract at residues 81–108 is disordered; the sequence is DPTCSWPASSPSSKDQTSPSHGEGCDFG. Positions 87–102 are enriched in low complexity; it reads PASSPSSKDQTSPSHG. 7 C2H2-type zinc fingers span residues 118-140, 146-168, 174-196, 202-224, 246-269, 281-304, and 310-332; these read YPCQFCDKSFSRLSYLKHHEQSH, FKCTYCSRLFKHKRSRDRHIKLH, YHCSECDAAFSRSDHLKIHLKTH, YKCAICRRGFLSSSSLHGHMQVH, QKCSQCEEGFDFPEDLQKHIAECH, LQCVYCHELFVEETSLMNHMEQVH, and NSCSICSESFHTVEELYSHMDSH. Positions 349 to 358 are enriched in low complexity; that stretch reads VGYTSVSSTT. Residues 349–397 form a disordered region; the sequence is VGYTSVSSTTPDSNLSVDSSTMVEAAPPIPKSRGRKRAAQQTPDMTGPS. 2 stretches are compositionally biased toward polar residues: residues 359-370 and 387-397; these read PDSNLSVDSSTM and AQQTPDMTGPS. Residues 405–429 form a C2H2-type 9; degenerate zinc finger; sequence YSCIYCNKQLFSSLAVLQIHLKTMH. C2H2-type zinc fingers lie at residues 437 to 460, 477 to 500, and 513 to 536; these read HICQYCLEVLPSLYNLNEHLKQVH, YQCNFCSEVVNDLNTLQEHIRCSH, and FFCPHCYMGFLTDSSLEEHIRQVH. Phosphoserine is present on serine 546. A C2H2-type 13; atypical zinc finger spans residues 560 to 585; that stretch reads YSCSYCTNSPIFNSVLKLNKHIKENH. A phosphoserine mark is found at serine 605 and serine 608. C2H2-type zinc fingers lie at residues 634–656, 664–686, 694–717, 722–745, 752–775, 783–805, and 809–832; these read YICNQCGAKYTSLDSFQTHLKTH, LTCPQCNKEFPNQESLLKHVTIH, YICESCDKQFTSVDDLQKHLLDMH, FRCTLCQEVFDSKVSIQLHLAVKH, YRCTSCNWDFRNETDLQLHVKHNH, HKCIFCGESFGTEVELQCHITTH, and YNCKFCSKAFHAIILLEKHLREKH. Residues 863-882 are disordered; the sequence is TNSQESHNSHDGSEEDVDTS. The segment at 886–908 adopts a C2H2-type 21; degenerate zinc-finger fold; sequence YGCDICGAAYTMETLLQNHQLRD. 3 C2H2-type zinc fingers span residues 930–952, 959–981, and 1020–1042; these read YKCNVCSRTFFSENGLREHMQTH, YMCPICGERFPSLLTLTEHKVTH, and FRCVVCMQTVTSTLELKIHGTFH. The segment at 1065 to 1083 adopts a C2H2-type 25; degenerate zinc-finger fold; the sequence is YKCASCLKEFRSKQDLVKL. A C2H2-type 26 zinc finger spans residues 1138 to 1161; sequence TRCSSCNVKFESESELQNHIQTIH. Residue lysine 1146 forms a Glycyl lysine isopeptide (Lys-Gly) (interchain with G-Cter in SUMO2) linkage. Residues 1168-1178 show a composition bias toward polar residues; that stretch reads SNSTQLKTPQV. Residues 1168 to 1188 are disordered; it reads SNSTQLKTPQVSPMPRISPSQ. 4 consecutive C2H2-type zinc fingers follow at residues 1195–1217, 1225–1247, 1256–1279, and 1286–1309; these read YQCIKCQMVFYNEWDIQVHVANH, HECKLCSQTFDSPAKLQCHLIEH, FKCPVCFTVFVQANKLQQHIFSAH, and YDCTQCPQKFFFQTELQNHTMTQH.

The protein belongs to the krueppel C2H2-type zinc-finger protein family. Interacts with EBF1. Interacts with SMAD1 and SMAD4. Predominantly expressed in hematopoietic cells. Present in organs and tissues that contain stem and progenitor cells, myeloid and/or lymphoid: placenta, spleen, lymph nodes, thymus, bone marrow and fetal liver. Within the hematopoietic system, it is abundant in CD34(+) cells but undetectable in mature peripheral blood leukocytes, and its levels rapidly decrease during the differentiation of CD34(+) cells in response to hemopoietins.

The protein resides in the nucleus. Functionally, transcription factor that can both act as an activator or a repressor depending on the context. Involved in BMP signaling and in the regulation of the immature compartment of the hematopoietic system. Associates with SMADs in response to BMP2 leading to activate transcription of BMP target genes. Acts as a transcriptional repressor via its interaction with EBF1, a transcription factor involved specification of B-cell lineage; this interaction preventing EBF1 to bind DNA and activate target genes. The protein is Zinc finger protein 521 (ZNF521) of Homo sapiens (Human).